Here is an 82-residue protein sequence, read N- to C-terminus: Conotoxin Cal30 (82 aa).

Residues 1–19 (MEKLIILLLVASLLVTTDS) form the signal peptide.

May contain 5 disulfide bonds. As to expression, expressed by the venom duct.

Its subcellular location is the secreted. Probable neurotoxin. The sequence is that of Conotoxin Cal30 from Californiconus californicus (California cone).